A 78-amino-acid polypeptide reads, in one-letter code: Large ribosomal subunit protein uL24 (78 aa).

The disordered stretch occupies residues 52-78 (PSEKTPNGGHVNKEMPIDISNVAKVEG).

The protein belongs to the universal ribosomal protein uL24 family. As to quaternary structure, part of the 50S ribosomal subunit.

Its function is as follows. One of two assembly initiator proteins, it binds directly to the 5'-end of the 23S rRNA, where it nucleates assembly of the 50S subunit. One of the proteins that surrounds the polypeptide exit tunnel on the outside of the subunit. The protein is Large ribosomal subunit protein uL24 of Campylobacter concisus (strain 13826).